The primary structure comprises 196 residues: C-type lectin domain family 3 member A (196 aa).

Positions 1-22 are cleaved as a signal peptide; it reads MAKNGLVLCILVVSLLLDQTDG. 3 disulfide bridges follow: C68–C78, C95–C191, and C167–C183. Residues 74–192 form the C-type lectin domain; that stretch reads VHKKCYLASE…CRSSKRYICE (119 aa).

The protein localises to the secreted. Its function is as follows. Promotes cell adhesion to laminin and fibronectin. This Mus musculus (Mouse) protein is C-type lectin domain family 3 member A (Clec3a).